The chain runs to 440 residues: Sequestosome-1 (440 aa).

Ala2 carries the N-acetylalanine modification. The tract at residues 2-50 (ASLTVKAYLLGKEDAAREIRRFSFCCSPEPEAEAEAAAGPGPCERLLSR) is interaction with LCK. The PB1 domain occupies 3 to 102 (SLTVKAYLLG…DIFRIYIKEK (100 aa)). Ser24 carries the phosphoserine modification. The interval 43–107 (PCERLLSRVA…YIKEKKECRR (65 aa)) is interaction with PRKCZ and dimerization. Residues 50-80 (RVAALFPALRPGGFQAHYRDEDGDLVAFSSD) are interaction with PAWR. Lys91 is covalently cross-linked (Glycyl lysine isopeptide (Lys-Gly) (interchain with G-Cter in ubiquitin)). An interaction with GABRR3 region spans residues 122–224 (VHPNVICDGC…EARPGPTAES (103 aa)). The ZZ-type zinc finger occupies 123–173 (HPNVICDGCNGPVVGTRYKCSVCPDYDLCSVCEGKGLHRGHTKLAFPSPFG). Positions 128, 131, 142, and 145 each coordinate Zn(2+). Position 148 is a phosphotyrosine (Tyr148). Cys151, Cys154, His160, and His163 together coordinate Zn(2+). Phosphoserine is present on residues Ser170 and Ser176. An LIM protein-binding (LB) region spans residues 170–220 (SPFGHLSEGFSHSRWLRKVKHGHFGWPGWEMGPPGNWSPRPPRAGEARPGP). Lys189 is covalently cross-linked (Glycyl lysine isopeptide (Lys-Gly) (interchain with G-Cter in ubiquitin)). Residues 196–235 (PGWEMGPPGNWSPRPPRAGEARPGPTAESASGPSEDPSVN) are disordered. Phosphoserine occurs at positions 207, 233, 249, and 266. Residues 228-233 (PSEDPS) carry the TRAF6-binding motif. A disordered region spans residues 264–390 (KRSRLTPVSP…ALYPHLPPEA (127 aa)). At Thr269 the chain carries Phosphothreonine. An interaction with NTRK1 region spans residues 269–440 (TPVSPESSST…IQYSKHPPPL (172 aa)). 2 positions are modified to phosphoserine: Ser272 and Ser282. Low complexity predominate over residues 283 to 296 (SSQPSSCCSDPSKP). 2 S-palmitoyl cysteine lipidation sites follow: Cys289 and Cys290. Ser306 carries the phosphoserine modification. The span at 310–324 (QMRKIALESEGRPEE) shows a compositional bias: basic and acidic residues. The interval 321–342 (RPEEQMESDNCSGGDDDWTHLS) is MAP1LC3B-binding. A phosphoserine mark is found at Ser328 and Ser332. Residues 336–341 (DDWTHL) carry the LIR motif. Basic and acidic residues predominate over residues 337–347 (DWTHLSSKEVD). The segment at 347-352 (DPSTGE) is interaction with KEAP1. Phosphoserine; by ULK1 is present on Ser349. Over residues 351–373 (GELQSLQMPESEGPSSLDPSQEG) the composition is skewed to polar residues. 4 positions are modified to phosphoserine: Ser355, Ser361, Ser365, and Ser366. Positions 389–434 (EADPRLIESLSQMLSMGFSDEGGWLTRLLQTKNYDIGAALDTIQYS) constitute a UBA domain. Ser403 bears the Phosphoserine; by CK2, ULK1 and TBK1 mark. Phosphoserine; by ULK1 is present on Ser407. N6-acetyllysine; alternate occurs at positions 420 and 435. A Glycyl lysine isopeptide (Lys-Gly) (interchain with G-Cter in ubiquitin); alternate cross-link involves residue Lys420. Residue Lys435 forms a Glycyl lysine isopeptide (Lys-Gly) (interchain with G-Cter in SUMO2); alternate linkage.

In terms of assembly, homooligomer or heterooligomer; may form homotypic arrays. Dimerization interferes with ubiquitin binding. Component of a ternary complex with PAWR and PRKCZ. Forms a complex with JUB/Ajuba, PRKCZ and TRAF6. Identified in a complex with TRAF6 and CYLD. Identified in a heterotrimeric complex with ubiquitin and ZFAND5, where ZFAND5 and SQSTM1 both interact with the same ubiquitin molecule. Interacts (via LIR motif) with MAP1LC3A and MAP1LC3B, as well as with other ATG8 family members, including GABARAP, GABARAPL1 and GABARAPL2; these interactions are necessary for the recruitment MAP1 LC3 family members to inclusion bodies containing polyubiquitinated protein aggregates and for their degradation by autophagy. Interacts directly with PRKCI and PRKCZ. Interacts with EBI3, LCK, RASA1, NR2F2, NTRK1, NTRK2, NTRK3, NBR1, MAP2K5 and MAPKAPK5. Upon TNF-alpha stimulation, interacts with RIPK1 probably bridging IKBKB to the TNF-R1 complex composed of TNF-R1/TNFRSF1A, TRADD and RIPK1. Interacts with the proteasome subunits PSMD4 and PSMC2. Interacts with TRAF6. Interacts with 'Lys-63'-linked polyubiquitinated MAPT/TAU. Interacts with FHOD3. Interacts with CYLD. Interacts with SESN1. Interacts with SESN2. Interacts with ULK1. Interacts with UBD. Interacts with WDR81; the interaction is direct and regulates the interaction of SQSTM1 with ubiquitinated proteins. Interacts with WDFY3; this interaction is required to recruit WDFY3 to cytoplasmic bodies and to PML bodies. Interacts with LRRC25. Interacts with STING1; leading to relocalization of STING1 to autophagosomes. Interacts (when phosphorylated at Ser-349) with KEAP1; the interaction is direct and inactivates the BCR(KEAP1) complex by sequestering KEAP1 in inclusion bodies, promoting its degradation. Interacts with MOAP1; promoting dissociation of SQSTM1 inclusion bodies that sequester KEAP1. Interacts with GBP1. Interacts with TAX1BP1. Interacts with (ubiquitinated) PEX5; specifically binds PEX5 ubiquitinated at 'Lys-209' in response to reactive oxygen species (ROS). Interacts (via PB1 domain) with TNS2; the interaction leads to sequestration of TNS2 in cytoplasmic aggregates with SQSTM1 and promotes TNS2 ubiquitination and proteasomal degradation. Interacts with IRS1; the interaction is disrupted by the presence of tensin TNS2. Interacts with TRIM5. Interacts with TRIM11 (when ubiquitinated); promoting AIM2 recruitment to autophagosomes and autophagy-dependent degradation of AIM2. Interacts with TRIM13. Interacts with TRIM16. Interacts with TRIM23. Interacts with TRIM50. Interacts with TRIM55. Interacts with ECSIT; this interaction inhibits TLR4 signaling via functional regulation of the TRAF6-ECSIT complex. Interacts with GABRR1, GABRR2 and GABRR3. Interacts with WDR83. Interacts with GRB2. Interacts with USP12; the interaction is independent of USP12 deubiquitinase activity and may be involved in regulation of autophagic flux. Interacts with ASB6. Phosphorylation at Ser-407 by ULK1 destabilizes the UBA dimer interface and increases binding affinity to ubiquitinated proteins. Phosphorylation at Ser-407 also primes for subsequent phosphorylation at Ser-403. Phosphorylation at Ser-403 by CK2 or ULK1 promotes binding to ubiquitinated proteins by increasing the affinity between the UBA domain and polyubiquitin chains. Phosphorylation at Ser-403 by ULK1 is stimulated by SESN2. Phosphorylated at Ser-403 by TBK1, leading to promote relocalization of 'Lys-63'-linked ubiquitinated STING1 to autophagosomes. Phosphorylation at Ser-349 by ULK1 promotes interaction with KEAP1 and inactivation of the BCR(KEAP1) complex, promoting NFE2L2/NRF2 nuclear accumulation and expression of phase II detoxifying enzymes. Phosphorylated in vitro by TTN. In terms of processing, ubiquitinated by UBE2J1 and RNF26 at Lys-435: ubiquitinated SQSTM1 attracts specific vesicle-associated adapters, forming a molecular bridge that restrains cognate vesicles in the perinuclear region and organizes the endosomal pathway for efficient cargo transport. Ubiquitination by UBE2D2 and UBE2D3 increases its ability to bind polyubiquitin chains by destabilizing the UBA dimer interface. Deubiquitination by USP15 releases target vesicles for fast transport into the cell periphery. Ubiquitinated by the BCR(KEAP1) complex at Lys-420, increasing SQSTM1 sequestering activity and promoting its degradation. Ubiquitinated via 'Lys-29' and 'Lys-33'-linked polyubiquitination leading to xenophagic targeting of bacteria and inhibition of their replication. Post-translationally, acetylated at Lys-420 and Lys-435 by KAT5/TIP60, promotes activity by destabilizing the UBA dimer interface and increases binding affinity to ubiquitinated proteins. Deacetylated by HDAC6. Palmitoylation at Cys-289 and Cys-290 by ZDHHC19 is required for efficient autophagic degradation of SQSTM1-cargo complexes by promoting affinity for ATG8 proteins and recruitment of p62 bodies to autophagosomes. Dealmitoylated at Cys-289 and Cys-290 by LYPLA1. In terms of processing, (Microbial infection) Cleaved by S.pyogenes SpeB protease; leading to its degradation. Degradation by SpeB prevents autophagy, promoting to S.pyogenes intracellular replication. Post-translationally, (Microbial infection) Deubiquitinated by Epstein-Barr virus BPLF1; leading to inhibition of the recruitment of MAP1LC3A/LC3 to SQSTM1-positive structures. Ubiquitously expressed.

It localises to the cytoplasmic vesicle. It is found in the autophagosome. The protein resides in the preautophagosomal structure. The protein localises to the cytoplasm. Its subcellular location is the cytosol. It localises to the nucleus. It is found in the PML body. The protein resides in the late endosome. The protein localises to the lysosome. Its subcellular location is the endoplasmic reticulum. It localises to the myofibril. It is found in the sarcomere. Functionally, molecular adapter required for selective macroautophagy (aggrephagy) by acting as a bridge between polyubiquitinated proteins and autophagosomes. Promotes the recruitment of ubiquitinated cargo proteins to autophagosomes via multiple domains that bridge proteins and organelles in different steps. SQSTM1 first mediates the assembly and removal of ubiquitinated proteins by undergoing liquid-liquid phase separation upon binding to ubiquitinated proteins via its UBA domain, leading to the formation of insoluble cytoplasmic inclusions, known as p62 bodies. SQSTM1 then interacts with ATG8 family proteins on autophagosomes via its LIR motif, leading to p62 body recruitment to autophagosomes, followed by autophagic clearance of ubiquitinated proteins. SQSTM1 is itself degraded along with its ubiquitinated cargos. Also required to recruit ubiquitinated proteins to PML bodies in the nucleus. Also involved in autophagy of peroxisomes (pexophagy) in response to reactive oxygen species (ROS) by acting as a bridge between ubiquitinated PEX5 receptor and autophagosomes. Acts as an activator of the NFE2L2/NRF2 pathway via interaction with KEAP1: interaction inactivates the BCR(KEAP1) complex by sequestering the complex in inclusion bodies, promoting nuclear accumulation of NFE2L2/NRF2 and subsequent expression of cytoprotective genes. Promotes relocalization of 'Lys-63'-linked ubiquitinated STING1 to autophagosomes. Involved in endosome organization by retaining vesicles in the perinuclear cloud: following ubiquitination by RNF26, attracts specific vesicle-associated adapters, forming a molecular bridge that restrains cognate vesicles in the perinuclear region and organizes the endosomal pathway for efficient cargo transport. Sequesters tensin TNS2 into cytoplasmic puncta, promoting TNS2 ubiquitination and proteasomal degradation. May regulate the activation of NFKB1 by TNF-alpha, nerve growth factor (NGF) and interleukin-1. May play a role in titin/TTN downstream signaling in muscle cells. Adapter that mediates the interaction between TRAF6 and CYLD. The chain is Sequestosome-1 from Homo sapiens (Human).